The following is a 324-amino-acid chain: Galactosylgalactosylxylosylprotein 3-beta-glucuronosyltransferase 2 (324 aa).

The Cytoplasmic segment spans residues 1–2 (MK). The helical; Signal-anchor for type II membrane protein transmembrane segment at 3 to 23 (SALCNRFFILLPWILIVIIML) threads the bilayer. Residues 24–324 (DVDPRRPAPQ…YHMDTVNIEV (301 aa)) lie on the Lumenal side of the membrane. The interval 34–78 (LTSRPYFSPHTVGCGGSRVPLRRSSPGRDAAEKRNESRPQLQPEP) is disordered. Residue N68 is glycosylated (N-linked (GlcNAc...) asparagine). D188 lines the Mn(2+) pocket. Catalysis depends on E274, which acts as the Proton acceptor. N293 carries an N-linked (GlcNAc...) asparagine glycan.

This sequence belongs to the glycosyltransferase 43 family. In terms of assembly, homodimer. It depends on Mn(2+) as a cofactor. As to expression, expressed in the cerebral cortex, cerebellum and whole brain.

It is found in the golgi apparatus membrane. It catalyses the reaction 3-O-(beta-D-galactosyl-(1-&gt;3)-beta-D-galactosyl-(1-&gt;4)-beta-D-xylosyl)-L-seryl-[protein] + UDP-alpha-D-glucuronate = 3-O-(beta-D-GlcA-(1-&gt;3)-beta-D-Gal-(1-&gt;3)-beta-D-Gal-(1-&gt;4)-beta-D-Xyl)-L-seryl-[protein] + UDP + H(+). Its pathway is protein modification; protein glycosylation. Involved in the biosynthesis of L2/HNK-1 carbohydrate epitope on both glycolipids and glycoproteins. Substrates include asialo-orosomucoid (ASOR), paragloboside (lacto-N-neotetraosylceramide), Gal-beta-1,4-GlcNAc-beta-1,3-Gal-beta-1,4-Glc-pyridylamine and Gal-beta-1,3-GlcNAc-beta-1,3-Gal-beta-1,4-Glc-pyridylamine. The chain is Galactosylgalactosylxylosylprotein 3-beta-glucuronosyltransferase 2 (B3gat2) from Rattus norvegicus (Rat).